Reading from the N-terminus, the 242-residue chain is Transcriptional regulatory protein btr (242 aa).

The 74-residue stretch at 158–231 (MRSEQRLAAF…QREVRLIDLP (74 aa)) folds into the HTH crp-type domain. Residues 191 to 210 (REEIGNYLGLTLETVSRLFS) constitute a DNA-binding region (H-T-H motif).

May regulate gene expression in response to changes in oxygen levels or to changes in the redox potential of the bacterial environment. The protein is Transcriptional regulatory protein btr (btr) of Bordetella pertussis (strain Tohama I / ATCC BAA-589 / NCTC 13251).